We begin with the raw amino-acid sequence, 279 residues long: Probable endonuclease 4 (279 aa).

Residues histidine 69, histidine 109, glutamate 145, aspartate 179, histidine 182, histidine 216, aspartate 229, histidine 231, and glutamate 261 each contribute to the Zn(2+) site.

This sequence belongs to the AP endonuclease 2 family. Zn(2+) is required as a cofactor.

The enzyme catalyses Endonucleolytic cleavage to 5'-phosphooligonucleotide end-products.. Functionally, endonuclease IV plays a role in DNA repair. It cleaves phosphodiester bonds at apurinic or apyrimidinic (AP) sites, generating a 3'-hydroxyl group and a 5'-terminal sugar phosphate. This Chlorobium phaeovibrioides (strain DSM 265 / 1930) (Prosthecochloris vibrioformis (strain DSM 265)) protein is Probable endonuclease 4.